A 442-amino-acid chain; its full sequence is MRGNFMSSIEKLGGLKQRLTITVSAEEVDKAYKSRLLKVARTAKIPKFRPGKASPAVVEKLYGKAILQEVGSELIQSSLREAVEEHQLRVAGAPDIKMDKILRGEPFKYVVNFEVYPEITLESLAGETIERTQVEITEEDLDKMLEALRKQYAEWKEVDRPAKADDRVIIDFEGTLDGKPFERGSAKDFQLELGSKRMIAGFEEGIEGMKPGESKALDITFPADYPSEDLAGKAAVFNITLQKVMAPELPVLDEQFAERLGIKEGGLEALRQKVRTNMEKEVHHHMENKLKMAVLDKLIERNPIEVPESLIEAEIDHLQQMTRQQVAMQTHKPDEAKKMELPRDPYREQATKRVKLGLLLAEVVKQHKIKADPEQLRARVEEVAASYQDPEKVISWYYSNKQMLSEIESVVLEDQAVAQLMSELEVEDQAIPYEEAVKQIQQ.

The region spanning 165–250 (DDRVIIDFEG…LQKVMAPELP (86 aa)) is the PPIase FKBP-type domain.

This sequence belongs to the FKBP-type PPIase family. Tig subfamily.

The protein resides in the cytoplasm. It catalyses the reaction [protein]-peptidylproline (omega=180) = [protein]-peptidylproline (omega=0). Its function is as follows. Involved in protein export. Acts as a chaperone by maintaining the newly synthesized protein in an open conformation. Functions as a peptidyl-prolyl cis-trans isomerase. This chain is Trigger factor, found in Coxiella burnetii (strain CbuK_Q154) (Coxiella burnetii (strain Q154)).